We begin with the raw amino-acid sequence, 386 residues long: Synaptotagmin-5 (386 aa).

A compositionally biased stretch (pro residues) spans 1-16 (MFPEPPTLGSPAPKTP). A disordered region spans residues 1-21 (MFPEPPTLGSPAPKTPPDSSR). At 1-24 (MFPEPPTLGSPAPKTPPDSSRIRQ) the chain is on the vesicular side. Residues 25–45 (GAVPAWVLATIVLGSGLLVFS) traverse the membrane as a helical segment. At 46–386 (SCFCLYRKRC…PDRARPIPAP (341 aa)) the chain is on the cytoplasmic side. 2 consecutive C2 domains span residues 108-227 (QLGR…QAWR) and 239-372 (KLGD…AQWH). Residues L138, D139, D145, D197, F198, D199, S202, D205, D270, D276, D330, and D332 each contribute to the Ca(2+) site.

This sequence belongs to the synaptotagmin family. In terms of assembly, homodimer. Interacts with both alpha- and beta-tubulin. Ca(2+) serves as cofactor.

The protein localises to the cytoplasmic vesicle. Its subcellular location is the secretory vesicle. It is found in the synaptic vesicle membrane. The protein resides in the recycling endosome membrane. In terms of biological role, may be involved in Ca(2+)-dependent exocytosis of secretory vesicles through Ca(2+) and phospholipid binding to the C2 domain or may serve as Ca(2+) sensors in the process of vesicular trafficking and exocytosis. Regulates the Ca(2+)-dependent secretion of norepinephrine in PC12 cells. Required for export from the endocytic recycling compartment to the cell surface. The sequence is that of Synaptotagmin-5 (Syt5) from Mus musculus (Mouse).